Consider the following 443-residue polypeptide: tRNA-2-methylthio-N(6)-dimethylallyladenosine synthase (443 aa).

An MTTase N-terminal domain is found at 3-120 (SKLYIKTFGC…LPELIDARRR (118 aa)). The [4Fe-4S] cluster site is built by Cys12, Cys49, Cys83, Cys157, Cys161, and Cys164. A Radical SAM core domain is found at 143–377 (RTTGATAFVS…KIQRNAQMIS (235 aa)). The region spanning 378–441 (QSMVDTIQRV…SHTLRGEISD (64 aa)) is the TRAM domain.

The protein belongs to the methylthiotransferase family. MiaB subfamily. Monomer. [4Fe-4S] cluster is required as a cofactor.

Its subcellular location is the cytoplasm. It carries out the reaction N(6)-dimethylallyladenosine(37) in tRNA + (sulfur carrier)-SH + AH2 + 2 S-adenosyl-L-methionine = 2-methylsulfanyl-N(6)-dimethylallyladenosine(37) in tRNA + (sulfur carrier)-H + 5'-deoxyadenosine + L-methionine + A + S-adenosyl-L-homocysteine + 2 H(+). In terms of biological role, catalyzes the methylthiolation of N6-(dimethylallyl)adenosine (i(6)A), leading to the formation of 2-methylthio-N6-(dimethylallyl)adenosine (ms(2)i(6)A) at position 37 in tRNAs that read codons beginning with uridine. The chain is tRNA-2-methylthio-N(6)-dimethylallyladenosine synthase from Nitrosomonas eutropha (strain DSM 101675 / C91 / Nm57).